A 321-amino-acid polypeptide reads, in one-letter code: MSQQEAVDAAFLPTLDLSRLVSSDAEERQKLVRACEVYGFFYLDLRSDAELIALWTGVLDLMGQYFNLSLDEKMRDSRNSDTHGYEPVATSTGAQDDLPDYYESLKASRDEVLTQSSKLAPAVKANHALLNRFIERAHAVTMMILRQLSIALELDDSHKFEAFHRHSEESLSTLSMFRYPKQEVLDVGVGHNKHTDIGTLTFLLCQQQGLQVLSKDPVGWRFVQPLPGCAVINVGDTLRFLSGSRFRSAVHRVIPVDQLQRQDRFSIAYFLRAENNATLNAVGGRTVSAKDWHDEKFDVFRKSREAQASDDVLTGGMERDM.

The disordered stretch occupies residues 77-97; that stretch reads SRNSDTHGYEPVATSTGAQDD. The region spanning 169–273 is the Fe2OG dioxygenase domain; that stretch reads ESLSTLSMFR…RFSIAYFLRA (105 aa). The Fe cation site is built by His194, Asp196, and His251. Arg264 serves as a coordination point for 2-oxoglutarate.

It belongs to the iron/ascorbate-dependent oxidoreductase family.

It participates in antifungal biosynthesis. 2-oxoglutarate-dependent dioxygenase; part of the gene cluster that mediates the biosynthesis of the antifungal antibiotic FR901469, an inhibitor of beta-1,3-glucansynthase, exerting antifungal activity against the pathogenes Candida albicans and Aspergillus fumigatus. FR901469 is a cyclic depsipeptide containing 12 amino acid residues and a fatty acid chain. The NRPS frbI contains 12 modules responsible for the formation of the depsipeptide backbone which is denoted as Acyl-Thr-Ala-Tyr-Val-4OHPro-Thr-Thr-3OHPro-threo3OHGln-Gly-Thr-Orn-OH (C71H116N14O23). The PKS frbB is probably involved in the production of the hydrocarbon chain, and the acyl-CoA ligase frbC might be involved in the transport of the chain to the peptide ptoduct of frbI. Because FR901469 contains 3 hydroxylated amino acid residues, the 3 oxygenases frbA, frbH, and frbJ might be participating in amino acid hydroxylation. As no thioesterase domains were detected in frbI or frbB, the thioesterases frbD and frbE may instead release and cyclize the products of the NRPS and PKS, respectively. The polypeptide is 2-oxoglutarate-dependent dioxygenase frbH (Dothideomycetidae sp. (strain 11243) (Fungal sp. (strain No.11243))).